The chain runs to 662 residues: Putative cysteine-rich receptor-like protein kinase 16 (662 aa).

A signal peptide spans 1 to 26 (MIFIMKLKNLLPIFCFFLVSFSISSA). Gnk2-homologous domains are found at residues 27-131 (QKCG…NRSF) and 137-244 (MTPF…LYQF). Residues 27–277 (QKCGKTGLFK…DDGGKISTRN (251 aa)) lie on the Extracellular side of the membrane. N-linked (GlcNAc...) asparagine glycans are attached at residues asparagine 55, asparagine 64, asparagine 106, asparagine 128, asparagine 145, asparagine 152, and asparagine 206. The helical transmembrane segment at 278–298 (ILGITVALAFFITVLLVLGYA) threads the bilayer. Over 299–662 (LSRRRKAYQE…DASITSVDLR (364 aa)) the chain is Cytoplasmic. Residues 335 to 612 (FQKSNKLGHG…VFQMLTNTFL (278 aa)) enclose the Protein kinase domain. ATP-binding positions include 341 to 349 (LGHGGFGEV) and lysine 363. The Proton acceptor role is filled by aspartate 460.

This sequence belongs to the protein kinase superfamily. Ser/Thr protein kinase family. CRK subfamily.

The protein resides in the membrane. The catalysed reaction is L-seryl-[protein] + ATP = O-phospho-L-seryl-[protein] + ADP + H(+). The enzyme catalyses L-threonyl-[protein] + ATP = O-phospho-L-threonyl-[protein] + ADP + H(+). This is Putative cysteine-rich receptor-like protein kinase 16 (CRK16) from Arabidopsis thaliana (Mouse-ear cress).